The following is a 759-amino-acid chain: Hormone-sensitive lipase (759 aa).

Positions 349–351 (HGG) match the Involved in the stabilization of the negatively charged intermediate by the formation of the oxyanion hole motif. Serine 423 is an active-site residue. The disordered stretch occupies residues 534–553 (GRKPQKTTSPTAESVRPTES). Phosphoserine is present on serine 557. The residue at position 559 (serine 559) is a Phosphoserine; by AMPK. Threonine 574 is modified (phosphothreonine). The tract at residues 583 to 604 (LSNSEPSDSPEMSQSMETLGPS) is disordered. Over residues 585–604 (NSEPSDSPEMSQSMETLGPS) the composition is skewed to polar residues. A phosphoserine mark is found at serine 597, serine 618, serine 650, and serine 651. Catalysis depends on residues aspartate 694 and histidine 724.

Belongs to the 'GDXG' lipolytic enzyme family. Monomer and homodimer. Interacts with CAVIN1 in the adipocyte cytoplasm. Interacts with PLIN5. Phosphorylation by AMPK reduces its translocation towards the lipid droplets.

It is found in the cell membrane. It localises to the membrane. Its subcellular location is the caveola. The protein localises to the cytoplasm. The protein resides in the cytosol. It is found in the lipid droplet. The enzyme catalyses a diacylglycerol + H2O = a monoacylglycerol + a fatty acid + H(+). The catalysed reaction is a triacylglycerol + H2O = a diacylglycerol + a fatty acid + H(+). It catalyses the reaction a monoacylglycerol + H2O = glycerol + a fatty acid + H(+). It carries out the reaction Hydrolyzes glycerol monoesters of long-chain fatty acids.. The enzyme catalyses cholesteryl (9Z-octadecenoate) + H2O = cholesterol + (9Z)-octadecenoate + H(+). The catalysed reaction is all-trans-retinyl hexadecanoate + H2O = all-trans-retinol + hexadecanoate + H(+). It catalyses the reaction 1,2-di-(9Z-octadecenoyl)-glycerol + H2O = (9Z-octadecenoyl)-glycerol + (9Z)-octadecenoate + H(+). It carries out the reaction 2-(5Z,8Z,11Z,14Z-eicosatetraenoyl)-glycerol + H2O = glycerol + (5Z,8Z,11Z,14Z)-eicosatetraenoate + H(+). The enzyme catalyses 1-(9Z-octadecenoyl)-glycerol + H2O = glycerol + (9Z)-octadecenoate + H(+). The catalysed reaction is 2-(9Z-octadecenoyl)-glycerol + H2O = glycerol + (9Z)-octadecenoate + H(+). It catalyses the reaction 1-O-hexadecyl-2-acetyl-sn-glycerol + H2O = 1-O-hexadecyl-sn-glycerol + acetate + H(+). It carries out the reaction 1,2-di-(9Z-octadecenoyl)-sn-glycerol + H2O = (9Z-octadecenoyl)-glycerol + (9Z)-octadecenoate + H(+). The enzyme catalyses 1,3-di-(9Z-octadecenoyl)-glycerol + H2O = 1-(9Z-octadecenoyl)-glycerol + (9Z)-octadecenoate + H(+). The catalysed reaction is 1,2-di-(9Z-octadecenoyl)-glycerol + (9Z)-octadecenoate + H(+) = 1,2,3-tri-(9Z-octadecenoyl)-glycerol + H2O. It catalyses the reaction 2,3-di-(9Z)-octadecenoyl-sn-glycerol + H2O = 2-(9Z-octadecenoyl)-glycerol + (9Z)-octadecenoate + H(+). It carries out the reaction 1,2,3-tri-(9Z-octadecenoyl)-glycerol + H2O = di-(9Z)-octadecenoylglycerol + (9Z)-octadecenoate + H(+). The enzyme catalyses 1,2-di-(9Z-octadecenoyl)-glycerol + H2O = 2-(9Z-octadecenoyl)-glycerol + (9Z)-octadecenoate + H(+). It participates in glycerolipid metabolism; triacylglycerol degradation. In terms of biological role, lipase with broad substrate specificity, catalyzing the hydrolysis of triacylglycerols (TAGs), diacylglycerols (DAGs), monoacylglycerols (MAGs), cholesteryl esters and retinyl esters. Shows a preferential hydrolysis of DAGs over TAGs and MAGs and of the fatty acid (FA) esters at the sn-1 and sn-2 positions of the glycerol backbone in TAGs. Preferentially hydrolyzes FA esters at the sn-3 position of the glycerol backbone in DAGs. Catalyzes the hydrolysis of 2-arachidonoylglycerol, an endocannabinoid and of 2-acetyl monoalkylglycerol ether, the penultimate precursor of the pathway for de novo synthesis of platelet-activating factor. In adipose tissue and heart, it primarily hydrolyzes stored triglycerides to free fatty acids, while in steroidogenic tissues, it principally converts cholesteryl esters to free cholesterol for steroid hormone production. The chain is Hormone-sensitive lipase (Lipe) from Mus musculus (Mouse).